A 174-amino-acid chain; its full sequence is Protein VdlD (174 aa).

The HotDog ACOT-type domain occupies 20–132 (DRTKLLMSYL…YFTMVAVENG (113 aa)).

The protein belongs to the acyl coenzyme A hydrolase family.

The sequence is that of Protein VdlD (vdlD) from Helicobacter pylori (strain J99 / ATCC 700824) (Campylobacter pylori J99).